Reading from the N-terminus, the 500-residue chain is Probable malate:quinone oxidoreductase (500 aa).

This sequence belongs to the MQO family. It depends on FAD as a cofactor.

The catalysed reaction is (S)-malate + a quinone = a quinol + oxaloacetate. It functions in the pathway carbohydrate metabolism; tricarboxylic acid cycle; oxaloacetate from (S)-malate (quinone route): step 1/1. The sequence is that of Probable malate:quinone oxidoreductase from Prochlorococcus marinus (strain MIT 9211).